The chain runs to 349 residues: Bifunctional protein FolKE (349 aa).

Positions 1–226 (MQTTYLSMGS…LFEIDSSKTD (226 aa)) are 2-amino-4-hydroxy-6-hydroxymethyldihydropteridine pyrophosphokinase. Residues 226–349 (DSIVLIKDIP…KRMEFLESLL (124 aa)) are GTP cyclohydrolase 1.

In the N-terminal section; belongs to the HPPK family. This sequence in the C-terminal section; belongs to the GTP cyclohydrolase I family. Homomer.

It carries out the reaction 6-hydroxymethyl-7,8-dihydropterin + ATP = (7,8-dihydropterin-6-yl)methyl diphosphate + AMP + H(+). The catalysed reaction is GTP + H2O = 7,8-dihydroneopterin 3'-triphosphate + formate + H(+). It participates in cofactor biosynthesis; 7,8-dihydroneopterin triphosphate biosynthesis; 7,8-dihydroneopterin triphosphate from GTP: step 1/1. It functions in the pathway cofactor biosynthesis; tetrahydrofolate biosynthesis; 2-amino-4-hydroxy-6-hydroxymethyl-7,8-dihydropteridine diphosphate from 7,8-dihydroneopterin triphosphate: step 4/4. The chain is Bifunctional protein FolKE (folKE) from Lactococcus lactis subsp. lactis (strain IL1403) (Streptococcus lactis).